Consider the following 456-residue polypeptide: Cysteine--tRNA ligase (456 aa).

Cys28 is a Zn(2+) binding site. A 'HIGH' region motif is present at residues 30–40 (ITVYDHCHLGH). Residues Cys209, His234, and Glu238 each coordinate Zn(2+). The short motif at 266–270 (KMAKS) is the 'KMSKS' region element. Residue Lys269 coordinates ATP.

It belongs to the class-I aminoacyl-tRNA synthetase family. In terms of assembly, monomer. Requires Zn(2+) as cofactor.

It localises to the cytoplasm. The enzyme catalyses tRNA(Cys) + L-cysteine + ATP = L-cysteinyl-tRNA(Cys) + AMP + diphosphate. The polypeptide is Cysteine--tRNA ligase (Legionella pneumophila subsp. pneumophila (strain Philadelphia 1 / ATCC 33152 / DSM 7513)).